Reading from the N-terminus, the 638-residue chain is MNRQVCKKSFSGRSQGFSGRSAVVSGSSRMSCVARSGGAGGGACGFRSGAGSFGSRSLYNLGSNKSISISVAAGSSRAGGFGGGRSSCGFAGGYGGGFGGSYGGGFGGGRGVGSGFGGAGGFGGAGGFGGPGVFGGPGSFGGPGGFGPGGFPGGIQEVIVNQSLLQPLNVEIDPQIGQVKAQEREQIKTLNNKFASFIDKVRFLEQQNKVLETKWELLQQQTTGSGPSSLEPCFESYISFLCKQLDSLLGERGNLEGELKSMQDLVEDFKKKYEDEINKRTAAENEFVGLKKDVDAAFMNKVELQAKVDSLTDEVSFLRTLYEMELSQMQSHASDTSVVLSMDNNRCLDLGSIIAEVRAQYEEIAQRSKSEAEALYQTKLGELQTTAGRHGDDLRNTKSEIMELNRMIQRLRAEIENVKKQNANLQTAIAEAEQRGEMALKDANAKLQDLQTALQKAKDDLARLLRDYQELMNVKLALDVEIATYRKLLEGEECRMSGECQSAVCISVVSNVTSTSGSSGSSRGVFGGVSGSGSGGYKGGSSSSSSSGYGVSGGSGSGYGGVSSGSTGGRGSSGSYQSSSSGSRLGGAGSISVSHSGMGSSSGSIQTSGGSGYKSGGGGSTSIRFSQTTSSSQHSSTK.

Residues 1-182 are head; that stretch reads MNRQVCKKSF…DPQIGQVKAQ (182 aa). Residues Arg-85 and Arg-110 each carry the omega-N-methylarginine modification. Positions 183 to 218 are coil 1A; sequence EREQIKTLNNKFASFIDKVRFLEQQNKVLETKWELL. The region spanning 183-496 is the IF rod domain; it reads EREQIKTLNN…KLLEGEECRM (314 aa). The linker 1 stretch occupies residues 219-237; sequence QQQTTGSGPSSLEPCFESY. The tract at residues 238-329 is coil 1B; it reads ISFLCKQLDS…TLYEMELSQM (92 aa). The interval 330–353 is linker 12; sequence QSHASDTSVVLSMDNNRCLDLGSI. Positions 354 to 492 are coil 2; sequence IAEVRAQYEE…ATYRKLLEGE (139 aa). Residues 493 to 638 form a tail region; the sequence is ECRMSGECQS…TSSSQHSSTK (146 aa). Positions 532-638 are disordered; it reads SGSGGYKGGS…TSSSQHSSTK (107 aa). Over residues 540–549 the composition is skewed to low complexity; that stretch reads GSSSSSSSGY. The span at 550–572 shows a compositional bias: gly residues; that stretch reads GVSGGSGSGYGGVSSGSTGGRGS. Over residues 573–583 the composition is skewed to low complexity; sequence SGSYQSSSSGS. Position 584 is an omega-N-methylarginine (Arg-584). Low complexity predominate over residues 590 to 608; sequence SISVSHSGMGSSSGSIQTS. Gly residues predominate over residues 609–620; sequence GGSGYKSGGGGS. The span at 626–638 shows a compositional bias: low complexity; that stretch reads SQTTSSSQHSSTK.

It belongs to the intermediate filament family. As to quaternary structure, heterotetramer of two type I and two type II keratins.

Its function is as follows. Probably contributes to terminal cornification. The sequence is that of Keratin, type II cytoskeletal 2 oral (KRT76) from Homo sapiens (Human).